The chain runs to 979 residues: Protein SMAX1-LIKE 6 (979 aa).

One can recognise a Clp R domain in the interval Ala8 to Ser190. Repeat stretches follow at residues Leu12–Leu86 and Val100–Ser190. The EAR signature appears at Leu833–Leu837.

It belongs to the ClpA/ClpB family. In terms of assembly, interacts with TPL/TPR in an EAR-motif dependent manner. Interacts with TPR3. Interacts with MAX2 and TPR2. Interacts with D14. The interaction with D14 occurs in the presence of (2'R) stereoisomers of strigolactones, but not (2'S) stereoisomers. Ubiquitinated upon strigolactone treatment. Probable proteolytic target of SCF(MAX2)-mediated stigolactone signaling. Detected in roots, seedlings and axillary branches. Expressed in the primary rosette buds and expanding leaves of adult rosettes, the vasculature of the hypocotyls, cotyledons, and mature roots, and in the midvein and petioles of young leaves.

The protein resides in the nucleus. In terms of biological role, probable component of a transcriptional corepressor complex involved in branching control. Regulates cotyledon expansion and lateral root growth, but not germination or hypocotyl elongation. Promotes auxin transport and PIN1 accumulation in the stem and represses BRC1/TCP18 expression in axillary buds. The sequence is that of Protein SMAX1-LIKE 6 from Arabidopsis thaliana (Mouse-ear cress).